The chain runs to 664 residues: MEDKKLLIYELVEELNKLAYEYYVLDNPSVSDKDYDKKYDKLVELEKETGLVLPYSPTQRVGDVVLSKFDKYTHKGKLWSLGKAQSLKEVEDWHNKNVKAVNEYNLTHDDKLPPIKYIITKKFDGLTINCTYNEDGILVTAATRGTGEIGEEITAQAKTIKTIPLKIDNDAVIEVHGEAIMTKEAFEEYNKVAVVPLKNLRNGAAGALRNLNVKETARRNLSAFFYDIGYNEGTPFKTYGEMLKFIKDHGIPMDDYAMECSTIEEIEKEINYIEEIRNKLNYDIDGAVIAVDDMKTRELLGYTVKFPKWALAYKFEAQEATTKLLEVEWNVGRSGRVTPTAILEPVEIGGVTVKRATLNNMDDIERKGVKLGSTVFLRRSNDVIPEIMGVVEESLEGSKDIEAPTTCPYCGSEIVQEGVHYFCENTLSCKPQLVKSIVHFGSREAMNIAGFSEKTAEQLFEELEIKSISDLYRIKKEDLLKLNRFGEKKAQNLIDAIESSKECDLPSFIYALGIPNVGKKTSTDLCKKFKTLDNLKKAKFEELVSVEDIGDIVAQSVLDFFNDETILKSIDELLSLGVTPKFKEEEIKENIFNGKTVVVTGSLSSFSRNEIKEKLQSLGAKVAGSVSKKTDYVLVGKDPGSKYEKALQLNIKIISEEDFKNMIG.

NAD(+) is bound by residues 32 to 36 and 80 to 81; these read DKDYD and SL. Lysine 122 acts as the N6-AMP-lysine intermediate in catalysis. NAD(+) contacts are provided by arginine 144, glutamate 178, and lysine 314. 4 residues coordinate Zn(2+): cysteine 407, cysteine 410, cysteine 423, and cysteine 429. Residues 587–664 form the BRCT domain; it reads IKENIFNGKT…SEEDFKNMIG (78 aa).

It belongs to the NAD-dependent DNA ligase family. LigA subfamily. Requires Mg(2+) as cofactor. Mn(2+) is required as a cofactor.

The catalysed reaction is NAD(+) + (deoxyribonucleotide)n-3'-hydroxyl + 5'-phospho-(deoxyribonucleotide)m = (deoxyribonucleotide)n+m + AMP + beta-nicotinamide D-nucleotide.. Its function is as follows. DNA ligase that catalyzes the formation of phosphodiester linkages between 5'-phosphoryl and 3'-hydroxyl groups in double-stranded DNA using NAD as a coenzyme and as the energy source for the reaction. It is essential for DNA replication and repair of damaged DNA. In Clostridium novyi (strain NT), this protein is DNA ligase.